Here is a 68-residue protein sequence, read N- to C-terminus: Conotoxin Vc7.3 (68 aa).

The first 24 residues, 1 to 24 (MIRMGFFLTLTVAVLLTSLICTEA), serve as a signal peptide directing secretion. A propeptide spanning residues 25 to 45 (VPTDKRGMERLFDQVLLKDQR) is cleaved from the precursor. 3 cysteine pairs are disulfide-bonded: Cys47–Cys55, Cys50–Cys60, and Cys54–Cys65.

It belongs to the conotoxin U superfamily. As to expression, expressed by the venom duct.

The protein resides in the secreted. The sequence is that of Conotoxin Vc7.3 from Conus victoriae (Queen Victoria cone).